A 193-amino-acid polypeptide reads, in one-letter code: Imidazoleglycerol-phosphate dehydratase (193 aa).

Belongs to the imidazoleglycerol-phosphate dehydratase family.

It localises to the cytoplasm. It catalyses the reaction D-erythro-1-(imidazol-4-yl)glycerol 3-phosphate = 3-(imidazol-4-yl)-2-oxopropyl phosphate + H2O. Its pathway is amino-acid biosynthesis; L-histidine biosynthesis; L-histidine from 5-phospho-alpha-D-ribose 1-diphosphate: step 6/9. In Methanospirillum hungatei JF-1 (strain ATCC 27890 / DSM 864 / NBRC 100397 / JF-1), this protein is Imidazoleglycerol-phosphate dehydratase.